A 764-amino-acid chain; its full sequence is MARTHIPGFPRIGAQRELKFAQESFWRGESGEPHLRGVARELRARHWQLQQDAGLDFVTVGDFAYYDQMLNLSALLGALPQRFGFEPKTLSLAEYYELARGNAAQPAMEMTKWFDTNYHYLVPELGPQTSFDGGVEWLFEEIDEALALNLPVKPVLIGPITYLWLSKSHVAGFDRLSLLPKLVIRYARLLDKLRQSGIEWVQLDEPALCVDLPAEWLDAFSAAYEVLGTSGVKVLLATYFESAAEHAPRVAALPVAGVHLDLVRAPQQLDAWRAALPAHAVLSAGVIDGRNIWRADLGEIVESLQSLQAEFGERLWIAPSCSLLHVPVSLDAEKKLDADLKSWLAFATEKLAEVATLALALRDPAAAEPALAATDRALEARRRSSAVVNALVQKRVAAVSSAMAERQSPFAERNRLQREALGLPLLPTTTIGSFPQTAAIRQARAAYKRGELRALDYLQRMRTEIEIAVRKQEELGLDVLVHGEAERNDMVEYFGEQLWGYAFTENGWVQSYGSRCVKPPIIYGDVYRPEPMTVETTRYAQSLTQRLMKGMLTGPVTMLQWSFVRDDQPRSTTALQLALAIRDEVVDLEKAGIRIIQIDEPAFREGLPLRRADWAAYLEWATRAFRISAAGVADQTQIHTHMCYSEFNDILPSIAAMDADVITIETSRSAMELLDGFGAFAYPNEIGPGVYDIHSPRVPGADAMQRLLERACEVIPAERLWVNPDCGLKTRGWPETEAALANMVRAAKALRAKLAARQADELTA.

5-methyltetrahydropteroyltri-L-glutamate contacts are provided by residues 16–19 (RELK) and lysine 112. L-homocysteine-binding positions include 431 to 433 (IGS) and glutamate 484. L-methionine contacts are provided by residues 431–433 (IGS) and glutamate 484. 5-methyltetrahydropteroyltri-L-glutamate is bound by residues 515-516 (RC) and tryptophan 561. An L-homocysteine-binding site is contributed by aspartate 599. Aspartate 599 provides a ligand contact to L-methionine. Glutamate 605 provides a ligand contact to 5-methyltetrahydropteroyltri-L-glutamate. The Zn(2+) site is built by histidine 641, cysteine 643, and glutamate 665. Histidine 694 functions as the Proton donor in the catalytic mechanism. Cysteine 726 contacts Zn(2+).

The protein belongs to the vitamin-B12 independent methionine synthase family. Zn(2+) serves as cofactor.

The catalysed reaction is 5-methyltetrahydropteroyltri-L-glutamate + L-homocysteine = tetrahydropteroyltri-L-glutamate + L-methionine. The protein operates within amino-acid biosynthesis; L-methionine biosynthesis via de novo pathway; L-methionine from L-homocysteine (MetE route): step 1/1. Catalyzes the transfer of a methyl group from 5-methyltetrahydrofolate to homocysteine resulting in methionine formation. This chain is 5-methyltetrahydropteroyltriglutamate--homocysteine methyltransferase, found in Paraburkholderia xenovorans (strain LB400).